The primary structure comprises 192 residues: Ion-translocating oxidoreductase complex subunit B (192 aa).

Residues 1–26 form a hydrophobic region; the sequence is MNAIWIAVAAVSLLGLAFGAILGYAS. The 4Fe-4S domain maps to 32–91; the sequence is EDDPVVEKIDEILPQSQCGQCGYPGCRPYAEAISCNGEKINRCAPGGEAVMLKIAELLNV. Cysteine 49, cysteine 52, cysteine 57, cysteine 74, cysteine 117, cysteine 120, cysteine 123, cysteine 127, cysteine 147, cysteine 150, cysteine 153, and cysteine 157 together coordinate [4Fe-4S] cluster. 4Fe-4S ferredoxin-type domains are found at residues 108-137 and 138-167; these read MVAV…GATR and AMHT…LQPV.

This sequence belongs to the 4Fe4S bacterial-type ferredoxin family. RnfB subfamily. The complex is composed of six subunits: RsxA, RsxB, RsxC, RsxD, RsxE and RsxG. The cofactor is [4Fe-4S] cluster.

It localises to the cell inner membrane. In terms of biological role, part of a membrane-bound complex that couples electron transfer with translocation of ions across the membrane. Required to maintain the reduced state of SoxR. The chain is Ion-translocating oxidoreductase complex subunit B from Escherichia coli O139:H28 (strain E24377A / ETEC).